We begin with the raw amino-acid sequence, 671 residues long: DNA ligase (671 aa).

NAD(+) contacts are provided by residues 32-36 (DAEYD), 81-82 (SL), and Glu-113. Residue Lys-115 is the N6-AMP-lysine intermediate of the active site. The NAD(+) site is built by Arg-136, Glu-173, Lys-290, and Lys-314. Cys-408, Cys-411, Cys-426, and Cys-432 together coordinate Zn(2+). Residues 593–671 (EIDSPFAGKT…EAEMLRLLGS (79 aa)) enclose the BRCT domain.

This sequence belongs to the NAD-dependent DNA ligase family. LigA subfamily. Mg(2+) is required as a cofactor. Requires Mn(2+) as cofactor.

The catalysed reaction is NAD(+) + (deoxyribonucleotide)n-3'-hydroxyl + 5'-phospho-(deoxyribonucleotide)m = (deoxyribonucleotide)n+m + AMP + beta-nicotinamide D-nucleotide.. In terms of biological role, DNA ligase that catalyzes the formation of phosphodiester linkages between 5'-phosphoryl and 3'-hydroxyl groups in double-stranded DNA using NAD as a coenzyme and as the energy source for the reaction. It is essential for DNA replication and repair of damaged DNA. The polypeptide is DNA ligase (Escherichia coli (strain ATCC 8739 / DSM 1576 / NBRC 3972 / NCIMB 8545 / WDCM 00012 / Crooks)).